The following is a 76-amino-acid chain: DNA polymerase III subunit theta (76 aa).

In terms of assembly, the DNA polymerase holoenzyme is a complex that contains 10 different types of subunits. These subunits are organized into 3 functionally essential subassemblies: the pol III core, the beta sliding clamp processivity factor and the clamp-loading complex. The pol III core (subunits alpha,epsilon and theta) contains the polymerase and the 3'-5' exonuclease proofreading activities. The polymerase is tethered to the template via the sliding clamp processivity factor. The clamp-loading complex assembles the beta processivity factor onto the primer template and plays a central role in the organization and communication at the replication fork. This complex contains delta, delta', psi and chi, and copies of either or both of two different DnaX proteins, gamma and tau. The composition of the holoenzyme is, therefore: (alpha,epsilon,theta)[2]-(gamma/tau)[3]-delta,delta', psi,chi-beta[4].

It catalyses the reaction DNA(n) + a 2'-deoxyribonucleoside 5'-triphosphate = DNA(n+1) + diphosphate. DNA polymerase III is a complex, multichain enzyme responsible for most of the replicative synthesis in bacteria. This DNA polymerase also exhibits 3' to 5' exonuclease activity. Its function is as follows. The exact function of the theta subunit is unknown. This is DNA polymerase III subunit theta (holE) from Escherichia coli O157:H7.